We begin with the raw amino-acid sequence, 102 residues long: RNA-binding protein Hfq (102 aa).

The Sm domain occupies 9-68 (DPFLNALRRERVPVSIYLVNGIKLQGQIESFDQFVILLKNTVSQMVYKHAISTVVPSRPV). The interval 63 to 102 (VPSRPVSHHSNNAGGGTSNNYHHGSNAQGSGAQQDSEETE) is disordered. A compositionally biased stretch (polar residues) spans 70–96 (HHSNNAGGGTSNNYHHGSNAQGSGAQQ).

The protein belongs to the Hfq family. As to quaternary structure, homohexamer.

RNA chaperone that binds small regulatory RNA (sRNAs) and mRNAs to facilitate mRNA translational regulation in response to envelope stress, environmental stress and changes in metabolite concentrations. Also binds with high specificity to tRNAs. The sequence is that of RNA-binding protein Hfq from Salmonella arizonae (strain ATCC BAA-731 / CDC346-86 / RSK2980).